A 504-amino-acid polypeptide reads, in one-letter code: NADH-quinone oxidoreductase subunit N (504 aa).

14 helical membrane-spanning segments follow: residues 9–29, 38–58, 78–98, 114–134, 135–155, 164–184, 216–236, 254–274, 282–302, 309–329, 341–361, 392–412, 425–447, and 476–496; these read IALLPIIVIGITIVGIMLSII, AVLTIIGMIIASVSSLLHMMW, VLYVILIMFVGIASSILGYVW, LLIASIGGILLVITNHLIVLF, LGIELISISICGLISYPVFSK, YIILSGVSSSFLLFGIVFIYC, IVIGLSMMMIGMGFKLSCVPF, YLATGSKIAVTAVLMRFLLIL, LHIFLSVSACCSMLFGSLMAI, RMLAYSSITNAGYLLIALIAL, ISVYLVSYLFANVGVWGIVNI, VIFVIAILSLAGIPMTFGFIG, LWFLTVMMIISSIISMFYYLKII, and FMVIIVAIIILFFGVYPQFIV.

This sequence belongs to the complex I subunit 2 family. As to quaternary structure, NDH-1 is composed of 13 different subunits. Subunits NuoA, H, J, K, L, M, N constitute the membrane sector of the complex.

The protein resides in the cell inner membrane. The catalysed reaction is a quinone + NADH + 5 H(+)(in) = a quinol + NAD(+) + 4 H(+)(out). In terms of biological role, NDH-1 shuttles electrons from NADH, via FMN and iron-sulfur (Fe-S) centers, to quinones in the respiratory chain. The immediate electron acceptor for the enzyme in this species is believed to be ubiquinone. Couples the redox reaction to proton translocation (for every two electrons transferred, four hydrogen ions are translocated across the cytoplasmic membrane), and thus conserves the redox energy in a proton gradient. This Blochmanniella floridana protein is NADH-quinone oxidoreductase subunit N.